Here is a 70-residue protein sequence, read N- to C-terminus: MKRILIAIVKLYRKYISPMKRVPTCRFTPTCSEYALEALQRYGAIRGSYLAVRRILKCHPFHKGGFDPVP.

The protein belongs to the UPF0161 family.

It is found in the cell membrane. Could be involved in insertion of integral membrane proteins into the membrane. This chain is Putative membrane protein insertion efficiency factor, found in Lachnoclostridium phytofermentans (strain ATCC 700394 / DSM 18823 / ISDg) (Clostridium phytofermentans).